Reading from the N-terminus, the 1041-residue chain is Importin-9 (1041 aa).

Position 2 is an N-acetylalanine (alanine 2). One can recognise an Importin N-terminal domain in the interval 43-119; that stretch reads AEEQIKVLEV…RELLPNGLRE (77 aa). The tract at residues 936 to 967 is disordered; sequence QATPAEWSQDDSNDMWEDQEEEEEEEEDGLAG. Over residues 943-964 the composition is skewed to acidic residues; it reads SQDDSNDMWEDQEEEEEEEEDG.

Belongs to the importin beta family. Interacts with histones H2A, H2B, H3 and H4. The binding is coupled to RanGTP cycles. Interacts with AKIRIN2; promoting association with pre-assembled proteasomes. Associates with pre-assembled proteasomes; interaction is indirect and mediated via interaction with AKIRIN2. Interacts with PPP2R1A and PPP2R1B.

The protein localises to the cytoplasm. Its subcellular location is the nucleus. In terms of biological role, nuclear transport receptor that mediates nuclear import of proteins, such as histones, proteasome and actin. Serves as receptor for nuclear localization signals (NLS) in cargo substrates. Is thought to mediate docking of the importin/substrate complex to the nuclear pore complex (NPC) through binding to nucleoporin and the complex is subsequently translocated through the pore by an energy requiring, Ran-dependent mechanism. At the nucleoplasmic side of the NPC, Ran binds to the importin, the importin/substrate complex dissociates and importin is re-exported from the nucleus to the cytoplasm where GTP hydrolysis releases Ran. The directionality of nuclear import is thought to be conferred by an asymmetric distribution of the GTP- and GDP-bound forms of Ran between the cytoplasm and nucleus. Mediates the import of pre-assembled proteasomes into the nucleus; AKIRIN2 acts as a molecular bridge between IPO9 and the proteasome complex. Mediates the nuclear import of histones H2A, H2B, H4 and H4. In addition to nuclear import, also acts as a chaperone for histones by preventing inappropriate non-nucleosomal interactions. Mediates the nuclear import of actin. The polypeptide is Importin-9 (Homo sapiens (Human)).